A 373-amino-acid chain; its full sequence is Erythronate-4-phosphate dehydrogenase (373 aa).

The substrate site is built by Ser45 and Thr66. Residues Asp146 and Thr175 each coordinate NAD(+). The active site involves Arg208. Residue Asp232 coordinates NAD(+). Glu237 is a catalytic residue. The active-site Proton donor is the His254. Residue Gly257 coordinates NAD(+). Tyr258 provides a ligand contact to substrate.

It belongs to the D-isomer specific 2-hydroxyacid dehydrogenase family. PdxB subfamily. In terms of assembly, homodimer.

The protein resides in the cytoplasm. It catalyses the reaction 4-phospho-D-erythronate + NAD(+) = (R)-3-hydroxy-2-oxo-4-phosphooxybutanoate + NADH + H(+). Its pathway is cofactor biosynthesis; pyridoxine 5'-phosphate biosynthesis; pyridoxine 5'-phosphate from D-erythrose 4-phosphate: step 2/5. Catalyzes the oxidation of erythronate-4-phosphate to 3-hydroxy-2-oxo-4-phosphonooxybutanoate. The polypeptide is Erythronate-4-phosphate dehydrogenase (Serratia proteamaculans (strain 568)).